A 143-amino-acid chain; its full sequence is Cold shock domain-containing protein CG9705 (143 aa).

The segment at 1-30 is disordered; it reads MTEPRTPEKLLAAKPPVLHHNSHSPNASLQ. Phosphoserine is present on residues serine 22, serine 24, serine 28, and serine 33. The CSD domain occupies 54–121; it reads VVTGMVKSFS…KHQAVHVQIS (68 aa). Phosphoserine is present on residues serine 139 and serine 140.

The chain is Cold shock domain-containing protein CG9705 from Drosophila melanogaster (Fruit fly).